A 417-amino-acid chain; its full sequence is Solanesyl diphosphate synthase 2, chloroplastic (417 aa).

Residues 1–60 (MMMSCRNIDLGTSVLDHSCSSSSTSRRFLFGNSSKTVCMIGGRSCVGNLVFLRRDLATCR) constitute a chloroplast transit peptide. Residues lysine 137, arginine 140, and histidine 175 each contribute to the isopentenyl diphosphate site. Residues aspartate 182 and aspartate 186 each contribute to the Mg(2+) site. Position 191 (arginine 191) interacts with an all-trans-polyprenyl diphosphate. Residue arginine 192 participates in isopentenyl diphosphate binding. The an all-trans-polyprenyl diphosphate site is built by lysine 268, threonine 269, glutamine 306, and lysine 323.

The protein belongs to the FPP/GGPP synthase family. Homodimer. Interacts with FBN5. Requires Mg(2+) as cofactor. In terms of tissue distribution, higher expression in leaves than in roots.

The protein resides in the plastid. It localises to the chloroplast. It catalyses the reaction 5 isopentenyl diphosphate + (2E,6E,10E)-geranylgeranyl diphosphate = all-trans-nonaprenyl diphosphate + 5 diphosphate. Involved in providing solanesyl diphosphate for plastoquinone-9 (PQ-9) formation in plastids. Catalyzes the elongation of the prenyl side chain of PQ-9 in plastids. Contributes to the biosynthesis of plastochromanol-8 (PC-8) in plastids. Does not contribute to the synthesis of tocopherol or ubiquinone. PQ-9 and PC-8 are lipophilic antioxidants that act as protectant against photooxidative stress under high light stress conditions. Prefers geranylgeranyl diphosphate to farnesyl diphosphate as substrate. No activity with geranyl diphosphate or dimethylallyl diphosphate as substrate. In Arabidopsis thaliana (Mouse-ear cress), this protein is Solanesyl diphosphate synthase 2, chloroplastic.